We begin with the raw amino-acid sequence, 709 residues long: Protein SOSEKI 3 (709 aa).

Residues 8-101 (SSVQVLYQLS…YVLRASELFD (94 aa)) are DIX-like oligomerization domain. Disordered stretches follow at residues 242-266 (LHTPAPRSLTSPTEPPFSPGSAKRM), 315-344 (RDGRSKSASPSSLNELREVQNEKEKEAEQS), 358-393 (GGSSKGKRTPQSTCEDPLPKSPEAKQMPRSRTKTPC), 411-439 (PSPAVDNKAHSSLDRQEIPPQEECKNRPS), and 506-560 (DSPT…DTKP). The segment covering 329–342 (ELREVQNEKEKEAE) has biased composition (basic and acidic residues). Over residues 417-436 (NKAHSSLDRQEIPPQEECKN) the composition is skewed to basic and acidic residues. Positions 529 to 544 (VKTSNSLPRVKTTTSP) are enriched in polar residues. Residues 663 to 692 (ILQECSTCGRTFKPDSLQVHMRGCHPPQYA) form a C2HC/C3H-type zinc finger. Zn(2+)-binding residues include Cys667, Cys670, His682, and Cys686.

The protein belongs to the SOSEKI family. In terms of assembly, homodimer. Forms long polymer filaments with other SOKs proteins polymers crucial for polar localization and biological activity. Requires Zn(2+) as cofactor.

It is found in the cell membrane. SOSEKI proteins locally interpret global polarity cues and can influence cell division orientation to coordinate cell polarization relative to body axes. This Physcomitrium patens (Spreading-leaved earth moss) protein is Protein SOSEKI 3.